Reading from the N-terminus, the 376-residue chain is dTDP-4-amino-4,6-dideoxygalactose transaminase (376 aa).

The residue at position 181 (lysine 181) is an N6-(pyridoxal phosphate)lysine.

The protein belongs to the DegT/DnrJ/EryC1 family. Homotetramer. Requires pyridoxal 5'-phosphate as cofactor.

It catalyses the reaction dTDP-4-amino-4,6-dideoxy-alpha-D-galactose + 2-oxoglutarate = dTDP-4-dehydro-6-deoxy-alpha-D-glucose + L-glutamate. Its pathway is bacterial outer membrane biogenesis; enterobacterial common antigen biosynthesis. Functionally, catalyzes the synthesis of dTDP-4-amino-4,6-dideoxy-D-galactose (dTDP-Fuc4N) from dTDP-4-keto-6-deoxy-D-glucose (dTDP-D-Glc4O) and L-glutamate. This is dTDP-4-amino-4,6-dideoxygalactose transaminase from Escherichia coli (strain K12).